A 572-amino-acid chain; its full sequence is MNFHRRRYPYYNRLRRLLPLVIAVSLSLLILFAFLSFLAPPPGDSDRLPPRVRYSSNDAIKATGFHIPRAGGRSDRDIWRSRNAEFFFGCSNASSKFANSKAVTRNDRYLVIATSGGLNQQRTGIVDAVVAARILNATLVVPKLDQKSYWKDASDFSHIFDVDWFISFLSGDVRIIKQLPLKGGRTWSTSRMRVPRKCNERCYINRVLPVLLKRHAVQLNKFDYRLSNKLSDDLQKLRCRVNYHALKFTDPILTMGNELVRRMRLRSKHFIALHLRYEPDMLAFSGCYYGGGDKERRELAAIRRRWKTLHINNPEKQRRQGRCPLTPEEVGLMLRALGYGSDVHIYVASGEVYGGEESLAPLKALFPHFYSKDTIATKEELEPFSSYSSRMAALDFLVCDESDVFVTNNNGNMAKILAGRRRYLGHKPTVRPNAKKLYRLFMNKENTTWEEFSSKVRSFQRGFMGEPKEVRAGRGEFHENPSTCICEDTEAKAKAQLESRKLGKKNKSTNKDAAVTVTNDDQTEEDDPDWSEPDYEEEQSDLQDRGLYNGTSLDYDDPSTSDEPELEAMLSD.

The chain crosses the membrane as a helical; Signal-anchor for type II membrane protein span at residues 17–37; sequence LLPLVIAVSLSLLILFAFLSF. Asn-92 and Asn-136 each carry an N-linked (GlcNAc...) asparagine glycan. A substrate-binding site is contributed by 274 to 276; the sequence is HLR. N-linked (GlcNAc...) asparagine glycans are attached at residues Asn-446 and Asn-506. The disordered stretch occupies residues 498 to 572; that stretch reads ESRKLGKKNK…EPELEAMLSD (75 aa). Residues 521–541 show a composition bias toward acidic residues; the sequence is DQTEEDDPDWSEPDYEEEQSD. N-linked (GlcNAc...) asparagine glycosylation is present at Asn-549. The span at 554-566 shows a compositional bias: acidic residues; that stretch reads DYDDPSTSDEPEL.

This sequence belongs to the glycosyltransferase GT106 family.

Its subcellular location is the membrane. Its pathway is glycan metabolism. The polypeptide is O-fucosyltransferase 16 (Arabidopsis thaliana (Mouse-ear cress)).